The sequence spans 298 residues: (DL)-glycerol-3-phosphatase 1, mitochondrial (298 aa).

The transit peptide at 1-46 (MLTTPTRFVALRIPFRSSNKIPISIAPSPKVFPRKPVIRVPASLRF) directs the protein to the mitochondrion. Catalysis depends on D77, which acts as the Nucleophile. Mg(2+) contacts are provided by D77, D79, and D242. Residue D79 is the Proton donor of the active site.

The protein belongs to the HAD-like hydrolase superfamily. DOG/GPP family. Mg(2+) serves as cofactor. In terms of tissue distribution, ubiquitous with highest expression in siliques. Mainly restricted to the meristem of immature flower and vascular elements of the root, shoot, leave, siliqua and developing embryo (at the protein level).

It localises to the mitochondrion. The enzyme catalyses sn-glycerol 1-phosphate + H2O = glycerol + phosphate. It carries out the reaction sn-glycerol 3-phosphate + H2O = glycerol + phosphate. It catalyses the reaction 5-amino-6-(5-phospho-D-ribitylamino)uracil + H2O = 5-amino-6-(D-ribitylamino)uracil + phosphate. Functionally, acts as a glycerol-3-phosphatase with higher stereospecificity for L-glycerol-3-phosphate than DL-glycerol-3-phosphate. Can also dephosphorylate in vitro 5-amino-6-(5-phospho-D-ribitylamino)uracil, also known as ARPP. In Arabidopsis thaliana (Mouse-ear cress), this protein is (DL)-glycerol-3-phosphatase 1, mitochondrial.